Consider the following 404-residue polypeptide: Glucoside xylosyltransferase 1 (404 aa).

Topologically, residues 1–6 (MRRYLR) are cytoplasmic. The chain crosses the membrane as a helical; Signal-anchor for type II membrane protein span at residues 7–29 (VVGLCLACGFCSLLYAFSQLAVS). Topologically, residues 30–404 (LEEGAAGGRR…NRYDTPPKER (375 aa)) are lumenal. Asn-201 carries an N-linked (GlcNAc...) asparagine glycan.

It belongs to the glycosyltransferase 8 family.

It is found in the membrane. The catalysed reaction is 3-O-(beta-D-glucosyl)-L-seryl-[EGF-like domain protein] + UDP-alpha-D-xylose = 3-O-[alpha-D-xylosyl-(1-&gt;3)-beta-D-glucosyl]-L-seryl-[EGF-like domain protein] + UDP + H(+). Its function is as follows. Glycosyltransferase which elongates the O-linked glucose attached to EGF-like repeats in the extracellular domain of Notch proteins by catalyzing the addition of xylose. This Mus musculus (Mouse) protein is Glucoside xylosyltransferase 1 (Gxylt1).